Consider the following 329-residue polypeptide: Malate dehydrogenase (329 aa).

Position 11–17 (11–17 (GAAGQIA)) interacts with NAD(+). Substrate-binding residues include R92 and R98. Residues N105, Q112, and 129–131 (VGN) contribute to the NAD(+) site. 2 residues coordinate substrate: N131 and R162. Residue H187 is the Proton acceptor of the active site.

It belongs to the LDH/MDH superfamily. MDH type 2 family.

The enzyme catalyses (S)-malate + NAD(+) = oxaloacetate + NADH + H(+). Catalyzes the reversible oxidation of malate to oxaloacetate. This Akkermansia muciniphila (strain ATCC BAA-835 / DSM 22959 / JCM 33894 / BCRC 81048 / CCUG 64013 / CIP 107961 / Muc) protein is Malate dehydrogenase.